We begin with the raw amino-acid sequence, 156 residues long: Ribosomal RNA large subunit methyltransferase H (156 aa).

S-adenosyl-L-methionine contacts are provided by residues leucine 72, glycine 104, and 123–128 (FGAMVW).

Belongs to the RNA methyltransferase RlmH family. As to quaternary structure, homodimer.

Its subcellular location is the cytoplasm. The catalysed reaction is pseudouridine(1915) in 23S rRNA + S-adenosyl-L-methionine = N(3)-methylpseudouridine(1915) in 23S rRNA + S-adenosyl-L-homocysteine + H(+). In terms of biological role, specifically methylates the pseudouridine at position 1915 (m3Psi1915) in 23S rRNA. This Dinoroseobacter shibae (strain DSM 16493 / NCIMB 14021 / DFL 12) protein is Ribosomal RNA large subunit methyltransferase H.